We begin with the raw amino-acid sequence, 276 residues long: Exosome complex component RRP43 (276 aa).

A2 is modified (N-acetylalanine).

It belongs to the RNase PH family. As to quaternary structure, component of the RNA exosome core complex (Exo-9), composed of EXOSC1, EXOSC2, EXOSC3, EXOSC4, EXOSC5, EXOSC6, EXOSC7, EXOSC8 and EXOSC9; within the complex interacts with EXOSC5 and EXOSC6. The catalytically inactive RNA exosome core complex (Exo-9) associates with the catalytic subunit EXOSC10/RRP6. Exo-9 may associate with DIS3 to form the nucleolar exosome complex, or DIS3L to form the cytoplasmic exosome complex. Exo-9 is formed by a hexameric base ring consisting of the heterodimers EXOSC4-EXOSC9, EXOSC5-EXOSC8 and EXOSC6-EXOSC7, and a cap ring consisting of EXOSC1, EXOSC2 and EXOSC3. The RNA exosome complex associates with cofactors C1D/RRP47, MPHOSPH6/MPP6 and MTREX/MTR4.

The protein resides in the cytoplasm. Its subcellular location is the nucleus. The protein localises to the nucleolus. Its function is as follows. Non-catalytic component of the RNA exosome complex which has 3'-&gt;5' exoribonuclease activity and participates in a multitude of cellular RNA processing and degradation events. In the nucleus, the RNA exosome complex is involved in proper maturation of stable RNA species such as rRNA, snRNA and snoRNA, in the elimination of RNA processing by-products and non-coding 'pervasive' transcripts, such as antisense RNA species and promoter-upstream transcripts (PROMPTs), and of mRNAs with processing defects, thereby limiting or excluding their export to the cytoplasm. The RNA exosome may be involved in Ig class switch recombination (CSR) and/or Ig variable region somatic hypermutation (SHM) by targeting AICDA deamination activity to transcribed dsDNA substrates. In the cytoplasm, the RNA exosome complex is involved in general mRNA turnover and specifically degrades inherently unstable mRNAs containing AU-rich elements (AREs) within their 3' untranslated regions, and in RNA surveillance pathways, preventing translation of aberrant mRNAs. It seems to be involved in degradation of histone mRNA. The catalytic inactive RNA exosome core complex of 9 subunits (Exo-9) is proposed to play a pivotal role in the binding and presentation of RNA for ribonucleolysis, and to serve as a scaffold for the association with catalytic subunits and accessory proteins or complexes. EXOSC8 binds to ARE-containing RNAs. The protein is Exosome complex component RRP43 (Exosc8) of Mus musculus (Mouse).